The sequence spans 676 residues: DNA ligase (676 aa).

NAD(+)-binding positions include 35–39 (DYEFD), 84–85 (SL), and Glu118. Lys120 (N6-AMP-lysine intermediate) is an active-site residue. NAD(+) contacts are provided by Arg141, Glu184, Lys299, and Lys323. Zn(2+)-binding residues include Cys417, Cys420, Cys435, and Cys441. The BRCT domain maps to 600 to 676 (LINRNFEGVN…ISEDEFNAML (77 aa)).

It belongs to the NAD-dependent DNA ligase family. LigA subfamily. Mg(2+) is required as a cofactor. The cofactor is Mn(2+).

The catalysed reaction is NAD(+) + (deoxyribonucleotide)n-3'-hydroxyl + 5'-phospho-(deoxyribonucleotide)m = (deoxyribonucleotide)n+m + AMP + beta-nicotinamide D-nucleotide.. DNA ligase that catalyzes the formation of phosphodiester linkages between 5'-phosphoryl and 3'-hydroxyl groups in double-stranded DNA using NAD as a coenzyme and as the energy source for the reaction. It is essential for DNA replication and repair of damaged DNA. The sequence is that of DNA ligase from Chlorobium phaeobacteroides (strain DSM 266 / SMG 266 / 2430).